Here is a 62-residue protein sequence, read N- to C-terminus: Alpha-conotoxin-like Ca1.1 (62 aa).

An N-terminal signal peptide occupies residues Met-1–Ser-21. The propeptide occupies Phe-22–Arg-46. Gln-47 bears the Pyrrolidone carboxylic acid mark. 2 disulfides stabilise this stretch: Cys-49-Cys-55 and Cys-50-Cys-61.

The protein belongs to the conotoxin A superfamily. In terms of tissue distribution, expressed by the venom duct.

Its subcellular location is the secreted. Alpha-conotoxins act on postsynaptic membranes, they bind to the nicotinic acetylcholine receptors (nAChR) and thus inhibit them. The sequence is that of Alpha-conotoxin-like Ca1.1 from Conus caracteristicus (Characteristic cone).